The sequence spans 323 residues: Elongation factor P--(R)-beta-lysine ligase (323 aa).

74 to 76 is a substrate binding site; it reads SPE. Residues 98-100 and N107 contribute to the ATP site; that span reads RNE. Y116 lines the substrate pocket. Residue 242-243 participates in ATP binding; sequence EL. E249 contacts substrate. Residue G298 coordinates ATP.

It belongs to the class-II aminoacyl-tRNA synthetase family. EpmA subfamily. Homodimer.

It carries out the reaction D-beta-lysine + L-lysyl-[protein] + ATP = N(6)-((3R)-3,6-diaminohexanoyl)-L-lysyl-[protein] + AMP + diphosphate + H(+). Its function is as follows. With EpmB is involved in the beta-lysylation step of the post-translational modification of translation elongation factor P (EF-P). Catalyzes the ATP-dependent activation of (R)-beta-lysine produced by EpmB, forming a lysyl-adenylate, from which the beta-lysyl moiety is then transferred to the epsilon-amino group of a conserved specific lysine residue in EF-P. This chain is Elongation factor P--(R)-beta-lysine ligase, found in Vibrio atlanticus (strain LGP32) (Vibrio splendidus (strain Mel32)).